The following is a 414-amino-acid chain: Gamma-glutamyl phosphate reductase (414 aa).

Belongs to the gamma-glutamyl phosphate reductase family.

The protein resides in the cytoplasm. It catalyses the reaction L-glutamate 5-semialdehyde + phosphate + NADP(+) = L-glutamyl 5-phosphate + NADPH + H(+). The protein operates within amino-acid biosynthesis; L-proline biosynthesis; L-glutamate 5-semialdehyde from L-glutamate: step 2/2. Catalyzes the NADPH-dependent reduction of L-glutamate 5-phosphate into L-glutamate 5-semialdehyde and phosphate. The product spontaneously undergoes cyclization to form 1-pyrroline-5-carboxylate. The protein is Gamma-glutamyl phosphate reductase of Clostridium botulinum (strain Alaska E43 / Type E3).